The chain runs to 477 residues: Cytochrome b mRNA maturase bI3 (477 aa).

The cytochrome b stretch occupies residues 1 to 163 (MRLLKSHPLL…IPWIGQDIVE (163 aa)). A run of 5 helical transmembrane segments spans residues 32–52 (FGSLLACCLIIQIVTGVTLAM), 86–106 (ASAFFFLVYLHIGRGMYYGSY), 113–133 (VWAIGTVILILMMATAFLGYV), 142–162 (WGATVITNLISAIPWIGQDIV), and 166–186 (IITLIINLSFIAILFSIVVVY). Positions 164–477 (SKIITLIINL…YSTLNYPDAK (314 aa)) are maturase.

It in the N-terminal section; belongs to the cytochrome b family. In the C-terminal section; belongs to the LAGLIDADG endonuclease family.

It localises to the mitochondrion inner membrane. In terms of biological role, mitochondrial mRNA maturase required for splicing of intron 3 of the cytochrome b (cob) gene, containing its own coding sequence. In Neurospora crassa (strain ATCC 24698 / 74-OR23-1A / CBS 708.71 / DSM 1257 / FGSC 987), this protein is Cytochrome b mRNA maturase bI3 (bI3).